The primary structure comprises 277 residues: Phosphonoacetaldehyde hydrolase-like protein (277 aa).

It belongs to the HAD-like hydrolase superfamily. PhnX family.

The protein is Phosphonoacetaldehyde hydrolase-like protein (phnX2) of Syntrophobacter fumaroxidans (strain DSM 10017 / MPOB).